A 965-amino-acid chain; its full sequence is Valine--tRNA ligase (965 aa).

A disordered region spans residues 1-22 (MENTPSHINKTEPSLDKTYSPQ). The 'HIGH' region motif lies at 56–66 (PNVTGSLHMGH). The short motif at 568-572 (KMSKS) is the 'KMSKS' region element. Lysine 571 contacts ATP. A coiled-coil region spans residues 896–965 (LIDKATELDR…IEQQATIAAL (70 aa)).

Belongs to the class-I aminoacyl-tRNA synthetase family. ValS type 1 subfamily. Monomer.

The protein resides in the cytoplasm. The enzyme catalyses tRNA(Val) + L-valine + ATP = L-valyl-tRNA(Val) + AMP + diphosphate. Catalyzes the attachment of valine to tRNA(Val). As ValRS can inadvertently accommodate and process structurally similar amino acids such as threonine, to avoid such errors, it has a 'posttransfer' editing activity that hydrolyzes mischarged Thr-tRNA(Val) in a tRNA-dependent manner. The chain is Valine--tRNA ligase from Yersinia pestis.